The following is a 142-amino-acid chain: Large ribosomal subunit protein uL13 (142 aa).

It belongs to the universal ribosomal protein uL13 family. Part of the 50S ribosomal subunit.

Functionally, this protein is one of the early assembly proteins of the 50S ribosomal subunit, although it is not seen to bind rRNA by itself. It is important during the early stages of 50S assembly. This Pseudomonas syringae pv. syringae (strain B728a) protein is Large ribosomal subunit protein uL13.